Reading from the N-terminus, the 255-residue chain is 1-(5-phosphoribosyl)-5-[(5-phosphoribosylamino)methylideneamino] imidazole-4-carboxamide isomerase (255 aa).

The Proton acceptor role is filled by D8. Residue D129 is the Proton donor of the active site.

It belongs to the HisA/HisF family.

It is found in the cytoplasm. The catalysed reaction is 1-(5-phospho-beta-D-ribosyl)-5-[(5-phospho-beta-D-ribosylamino)methylideneamino]imidazole-4-carboxamide = 5-[(5-phospho-1-deoxy-D-ribulos-1-ylimino)methylamino]-1-(5-phospho-beta-D-ribosyl)imidazole-4-carboxamide. The protein operates within amino-acid biosynthesis; L-histidine biosynthesis; L-histidine from 5-phospho-alpha-D-ribose 1-diphosphate: step 4/9. This is 1-(5-phosphoribosyl)-5-[(5-phosphoribosylamino)methylideneamino] imidazole-4-carboxamide isomerase from Prochlorococcus marinus (strain MIT 9301).